The chain runs to 261 residues: Cyclin-J18-like (261 aa).

Belongs to the cyclin family.

This chain is Cyclin-J18-like, found in Oryza sativa subsp. japonica (Rice).